A 528-amino-acid chain; its full sequence is 2-isopropylmalate synthase (528 aa).

The Pyruvate carboxyltransferase domain occupies 12 to 279 (IRIFDTTLRD…DSSINTPRIV (268 aa)). Mn(2+) is bound by residues aspartate 21, histidine 214, histidine 216, and asparagine 250. The interval 401–528 (RLASMTISDV…STDVPTPATA (128 aa)) is regulatory domain.

Belongs to the alpha-IPM synthase/homocitrate synthase family. LeuA type 1 subfamily. Homodimer. It depends on Mn(2+) as a cofactor.

The protein resides in the cytoplasm. It catalyses the reaction 3-methyl-2-oxobutanoate + acetyl-CoA + H2O = (2S)-2-isopropylmalate + CoA + H(+). Its pathway is amino-acid biosynthesis; L-leucine biosynthesis; L-leucine from 3-methyl-2-oxobutanoate: step 1/4. In terms of biological role, catalyzes the condensation of the acetyl group of acetyl-CoA with 3-methyl-2-oxobutanoate (2-ketoisovalerate) to form 3-carboxy-3-hydroxy-4-methylpentanoate (2-isopropylmalate). The sequence is that of 2-isopropylmalate synthase from Stenotrophomonas maltophilia (strain K279a).